Consider the following 599-residue polypeptide: Pentatricopeptide repeat-containing protein At3g62470, mitochondrial (599 aa).

A mitochondrion-targeting transit peptide spans 1-99 (MAAAPWLHLS…RGFSSGSSNV (99 aa)). PPR repeat units lie at residues 194–228 (DSRTYNSMMSILAKTRQFETMVSVLEEMGTKGLLT), 230–262 (ETFTIAMKAFAAAKERKKAVGIFELMKKYKFKI), 263–293 (GVETINCLLDSLGRAKLGKEAQVLFDKLKER), 297–331 (NMMTYTVLLNGWCRVRNLIEAARIWNDMIDQGLKP), 332–366 (DIVAHNVMLEGLLRSRKKSDAIKLFHVMKSKGPCP), 367–401 (NVRSYTIMIRDFCKQSSMETAIEYFDDMVDSGLQP), 402–436 (DAAVYTCLITGFGTQKKLDTVYELLKEMQEKGHPP), 437–471 (DGKTYNALIKLMANQKMPEHATRIYNKMIQNEIEP), 472–506 (SIHTFNMIMKSYFMARNYEMGRAVWEEMIKKGICP), and 507–541 (DDNSYTVLIRGLIGEGKSREACRYLEEMLDKGMKT).

Belongs to the PPR family. P subfamily.

It is found in the mitochondrion. The chain is Pentatricopeptide repeat-containing protein At3g62470, mitochondrial from Arabidopsis thaliana (Mouse-ear cress).